The sequence spans 108 residues: AFELTQTPSSVEAAVGGTVTIKCQSSQSIGTYLAWYZZKPGQPPKLLIYRASTLASGVSSRFKGSGSGTEFTLTISGVECADAATYYCQGTYYZSASFGGGTEVVVKG.

Residues Ala-1–Cys-23 are framework-1. Positions Gln-24–Ala-34 are complementarity-determining-1. The segment at Trp-35–Tyr-49 is framework-2. Positions Arg-50–Ser-56 are complementarity-determining-2. Residues Gly-57–Cys-88 are framework-3. The interval Gln-89 to Ser-97 is complementarity-determining-3. Residues Phe-98–Lys-107 form a framework-4 region.

This is Ig kappa chain V region 120 from Oryctolagus cuniculus (Rabbit).